The sequence spans 979 residues: Translation initiation factor IF-2 (979 aa).

A disordered region spans residues 68–392 (VKQKQGTPAS…SRAAQDAMEL (325 aa)). Composition is skewed to basic and acidic residues over residues 102 to 179 (QDMR…KPEE), 217 to 229 (EMEK…EVFR), and 260 to 273 (TKED…DADG). A compositionally biased stretch (polar residues) spans 309-326 (PSGNKNNNRPAQQQSNAS). A compositionally biased stretch (basic and acidic residues) spans 347-356 (DVQRQVKETL). A tr-type G domain is found at 478 to 646 (ARPPIVTVMG…KVLLEADILE (169 aa)). A G1 region spans residues 487–494 (GHVDHGKT). GTP is bound at residue 487-494 (GHVDHGKT). Residues 512 to 516 (GITQH) form a G2 region. The tract at residues 534 to 537 (DTPG) is G3. GTP-binding positions include 534 to 538 (DTPGH) and 588 to 591 (NKID). The segment at 588 to 591 (NKID) is G4. Residues 624–626 (SAK) are G5.

Belongs to the TRAFAC class translation factor GTPase superfamily. Classic translation factor GTPase family. IF-2 subfamily.

It localises to the cytoplasm. Its function is as follows. One of the essential components for the initiation of protein synthesis. Protects formylmethionyl-tRNA from spontaneous hydrolysis and promotes its binding to the 30S ribosomal subunits. Also involved in the hydrolysis of GTP during the formation of the 70S ribosomal complex. The protein is Translation initiation factor IF-2 of Porphyromonas gingivalis (strain ATCC 33277 / DSM 20709 / CIP 103683 / JCM 12257 / NCTC 11834 / 2561).